The primary structure comprises 45 residues: FKBP-type peptidyl-prolyl cis-trans isomerase, chloroplastic (45 aa).

It belongs to the FKBP-type PPIase family. As to expression, expressed in leaves, but not in roots.

Its subcellular location is the plastid. The protein resides in the chloroplast thylakoid lumen. The enzyme catalyses [protein]-peptidylproline (omega=180) = [protein]-peptidylproline (omega=0). PPIases accelerate the folding of proteins. It catalyzes the cis-trans isomerization of proline imidic peptide bonds in oligopeptides. In Vicia faba (Broad bean), this protein is FKBP-type peptidyl-prolyl cis-trans isomerase, chloroplastic.